The sequence spans 238 residues: Ras association domain-containing protein 3 (238 aa).

Position 2 is an N-acetylserine (Ser2). Residues 26–48 form a disordered region; that stretch reads RAPQGKPRSGQQDVEKEKETHSY. Residues 38–48 are compositionally biased toward basic and acidic residues; the sequence is DVEKEKETHSY. The region spanning 79–186 is the Ras-associating domain; the sequence is YTGFIKVQME…TLSFVLREHE (108 aa). The SARAH domain maps to 187-234; it reads IGEWEAFSLPELQNFLRILDKEEDEQLQNLKRRYTAYRQKLEEALREV.

In terms of tissue distribution, widely expressed.

It localises to the cytoplasm. The protein localises to the cytoskeleton. This chain is Ras association domain-containing protein 3 (RASSF3), found in Homo sapiens (Human).